The sequence spans 183 residues: MKLLFPVFASLMLQYQVNTEFIGLRRCLMGFGRCRDHCNVDEKEIQKCKMKKCCVGPKVVKLIKNYLQYGIPNVLNEDVQEMLKPAKNSSAVIQRKHILSVLPQIKSTSFFANTNFVIIPNATPMNSATISTMTPGQITYTATSTKSNTKESRDSATASPPPAPPPPNILPTPSLELEKAEEQ.

Positions 1–19 (MKLLFPVFASLMLQYQVNT) are cleaved as a signal peptide. 3 disulfide bridges follow: C27–C53, C34–C48, and C38–C54. The interval 141-183 (TATSTKSNTKESRDSATASPPPAPPPPNILPTPSLELEKAEEQ) is disordered. Over residues 159 to 170 (SPPPAPPPPNIL) the composition is skewed to pro residues.

Belongs to the beta-defensin family.

It localises to the secreted. In terms of biological role, has antibacterial activity. The polypeptide is Beta-defensin 129 (DEFB129) (Pongo pygmaeus (Bornean orangutan)).